The primary structure comprises 366 residues: 3-isopropylmalate dehydrogenase (366 aa).

Residue 77–90 participates in NAD(+) binding; sequence GPKWDDNPPHLRPE. Residues Arg97, Arg107, Arg135, and Asp223 each coordinate substrate. Mg(2+) is bound by residues Asp223, Asp246, and Asp250. Position 280 to 292 (280 to 292) interacts with NAD(+); that stretch reads GSAPDIAGMNKAN.

Belongs to the isocitrate and isopropylmalate dehydrogenases family. LeuB type 1 subfamily. In terms of assembly, homodimer. The cofactor is Mg(2+). Mn(2+) is required as a cofactor.

The protein localises to the cytoplasm. It carries out the reaction (2R,3S)-3-isopropylmalate + NAD(+) = 4-methyl-2-oxopentanoate + CO2 + NADH. The protein operates within amino-acid biosynthesis; L-leucine biosynthesis; L-leucine from 3-methyl-2-oxobutanoate: step 3/4. Functionally, catalyzes the oxidation of 3-carboxy-2-hydroxy-4-methylpentanoate (3-isopropylmalate) to 3-carboxy-4-methyl-2-oxopentanoate. The product decarboxylates to 4-methyl-2 oxopentanoate. This Bacillus caldotenax protein is 3-isopropylmalate dehydrogenase (leuB).